The following is a 255-amino-acid chain: Putative cysteine-rich repeat secretory protein 10 (255 aa).

The first 26 residues, 1-26, serve as a signal peptide directing secretion; it reads MFSSSVSISILVVVAMQFSFIHNVLS. 2 consecutive Gnk2-homologous domains span residues 33–134 and 140–252; these read YLQH…EIYT and FKHY…LYPF.

Belongs to the cysteine-rich repeat secretory protein family.

It is found in the secreted. The polypeptide is Putative cysteine-rich repeat secretory protein 10 (CRRSP10) (Arabidopsis thaliana (Mouse-ear cress)).